The following is a 648-amino-acid chain: Biosynthetic arginine decarboxylase (648 aa).

N6-(pyridoxal phosphate)lysine is present on Lys109. 291–301 provides a ligand contact to substrate; sequence LDVGGGLGVDY.

Belongs to the Orn/Lys/Arg decarboxylase class-II family. SpeA subfamily. It depends on Mg(2+) as a cofactor. Requires pyridoxal 5'-phosphate as cofactor.

It carries out the reaction L-arginine + H(+) = agmatine + CO2. Its function is as follows. Catalyzes the biosynthesis of agmatine from arginine. In Prochlorococcus marinus (strain SARG / CCMP1375 / SS120), this protein is Biosynthetic arginine decarboxylase.